A 163-amino-acid polypeptide reads, in one-letter code: MPSFDIVSEVDLQEARNAVDNASREVESRFDFRNVEASFELNDASKTIKVLSESDFQVNQLLDILRAKLLKRGIEGSSLDVPENIVHSGKTWFVEAKLKQGIESATQKKIVKMIKDSKLKVQAQIQGDEIRVTGKSRDDLQAVMAVVRGGDLGQPFQFKNFRD.

Belongs to the YajQ family.

Its function is as follows. Nucleotide-binding protein. The protein is Nucleotide-binding protein YajQ of Escherichia coli O127:H6 (strain E2348/69 / EPEC).